The chain runs to 165 residues: Endoribonuclease YbeY (165 aa).

The Zn(2+) site is built by His131, His135, and His141.

Belongs to the endoribonuclease YbeY family. The cofactor is Zn(2+).

Its subcellular location is the cytoplasm. Its function is as follows. Single strand-specific metallo-endoribonuclease involved in late-stage 70S ribosome quality control and in maturation of the 3' terminus of the 16S rRNA. This chain is Endoribonuclease YbeY, found in Agathobacter rectalis (strain ATCC 33656 / DSM 3377 / JCM 17463 / KCTC 5835 / VPI 0990) (Eubacterium rectale).